The following is an 82-amino-acid chain: Small ribosomal subunit protein bS16 (82 aa).

This sequence belongs to the bacterial ribosomal protein bS16 family.

The protein is Small ribosomal subunit protein bS16 of Haemophilus influenzae (strain 86-028NP).